The following is a 545-amino-acid chain: Acetamidase (545 aa).

Catalysis depends on charge relay system residues Lys-130 and Ser-205. Ser-229 functions as the Acyl-ester intermediate in the catalytic mechanism.

This sequence belongs to the amidase family.

The catalysed reaction is a monocarboxylic acid amide + H2O = a monocarboxylate + NH4(+). It catalyses the reaction acetamide + H2O = acetate + NH4(+). Allows acetamide to be used as a sole carbon or nitrogen source. In Aspergillus oryzae (strain ATCC 42149 / RIB 40) (Yellow koji mold), this protein is Acetamidase (amdS).